Consider the following 217-residue polypeptide: N-(5'-phosphoribosyl)anthranilate isomerase (217 aa).

This sequence belongs to the TrpF family.

It catalyses the reaction N-(5-phospho-beta-D-ribosyl)anthranilate = 1-(2-carboxyphenylamino)-1-deoxy-D-ribulose 5-phosphate. The protein operates within amino-acid biosynthesis; L-tryptophan biosynthesis; L-tryptophan from chorismate: step 3/5. The sequence is that of N-(5'-phosphoribosyl)anthranilate isomerase from Synechococcus sp. (strain ATCC 27144 / PCC 6301 / SAUG 1402/1) (Anacystis nidulans).